Here is a 355-residue protein sequence, read N- to C-terminus: 3-dehydroquinate synthase (355 aa).

NAD(+)-binding positions include 71-76 (EGEASK), 105-109 (GVVGD), 129-130 (TS), Lys142, and Lys151. Zn(2+) contacts are provided by Glu184, His246, and His263.

Belongs to the sugar phosphate cyclases superfamily. Dehydroquinate synthase family. It depends on Co(2+) as a cofactor. Zn(2+) serves as cofactor. NAD(+) is required as a cofactor.

It localises to the cytoplasm. The enzyme catalyses 7-phospho-2-dehydro-3-deoxy-D-arabino-heptonate = 3-dehydroquinate + phosphate. Its pathway is metabolic intermediate biosynthesis; chorismate biosynthesis; chorismate from D-erythrose 4-phosphate and phosphoenolpyruvate: step 2/7. In terms of biological role, catalyzes the conversion of 3-deoxy-D-arabino-heptulosonate 7-phosphate (DAHP) to dehydroquinate (DHQ). This Streptococcus thermophilus (strain ATCC BAA-491 / LMD-9) protein is 3-dehydroquinate synthase.